Consider the following 98-residue polypeptide: NADH-ubiquinone oxidoreductase chain 4L (98 aa).

The next 3 helical transmembrane spans lie at 2-22, 26-46, and 59-79; these read SPAVLNITMAFTFSLLGTLMF, LMSTLLCLEGMMLSLFMLATI, and IPIAILVFAACEAAVGLALLA.

This sequence belongs to the complex I subunit 4L family. In terms of assembly, core subunit of respiratory chain NADH dehydrogenase (Complex I) which is composed of 45 different subunits.

Its subcellular location is the mitochondrion inner membrane. The enzyme catalyses a ubiquinone + NADH + 5 H(+)(in) = a ubiquinol + NAD(+) + 4 H(+)(out). Core subunit of the mitochondrial membrane respiratory chain NADH dehydrogenase (Complex I) which catalyzes electron transfer from NADH through the respiratory chain, using ubiquinone as an electron acceptor. Part of the enzyme membrane arm which is embedded in the lipid bilayer and involved in proton translocation. The sequence is that of NADH-ubiquinone oxidoreductase chain 4L (MT-ND4L) from Alexandromys kikuchii (Taiwan vole).